Reading from the N-terminus, the 177-residue chain is Peptidyl-tRNA hydrolase 1 (177 aa).

Tyr18 serves as a coordination point for tRNA. Residue His23 is the Proton acceptor of the active site. The tRNA site is built by Phe65, Asn67, and Asn113.

The protein belongs to the PTH family. In terms of assembly, monomer.

The protein resides in the cytoplasm. It carries out the reaction an N-acyl-L-alpha-aminoacyl-tRNA + H2O = an N-acyl-L-amino acid + a tRNA + H(+). Functionally, hydrolyzes ribosome-free peptidyl-tRNAs (with 1 or more amino acids incorporated), which drop off the ribosome during protein synthesis, or as a result of ribosome stalling. In terms of biological role, catalyzes the release of premature peptidyl moieties from peptidyl-tRNA molecules trapped in stalled 50S ribosomal subunits, and thus maintains levels of free tRNAs and 50S ribosomes. In Corynebacterium glutamicum (strain ATCC 13032 / DSM 20300 / JCM 1318 / BCRC 11384 / CCUG 27702 / LMG 3730 / NBRC 12168 / NCIMB 10025 / NRRL B-2784 / 534), this protein is Peptidyl-tRNA hydrolase 1.